Reading from the N-terminus, the 408-residue chain is Aminomethyltransferase, mitochondrial (408 aa).

Residues 1–30 (MRGGLWQLGQSITRRLANGGDKKAVARRCF) constitute a mitochondrion transit peptide. Substrate-binding residues include E235, R266, and Y404.

The protein belongs to the GcvT family. The glycine cleavage system is composed of four proteins: P, T, L and H.

The protein localises to the mitochondrion. It carries out the reaction N(6)-[(R)-S(8)-aminomethyldihydrolipoyl]-L-lysyl-[protein] + (6S)-5,6,7,8-tetrahydrofolate = N(6)-[(R)-dihydrolipoyl]-L-lysyl-[protein] + (6R)-5,10-methylene-5,6,7,8-tetrahydrofolate + NH4(+). Its function is as follows. The glycine cleavage system catalyzes the degradation of glycine. The polypeptide is Aminomethyltransferase, mitochondrial (GDCST) (Pisum sativum (Garden pea)).